Here is a 151-residue protein sequence, read N- to C-terminus: uncharacterized protein (151 aa).

Residues 48-151 form a disordered region; that stretch reads RPPGWQPPVN…SKFDHTRKKF (104 aa). Over residues 55 to 77 the composition is skewed to polar residues; the sequence is PVNTGPTSPVSINASNAAPSNLK. Low complexity-rich tracts occupy residues 85 to 105 and 123 to 141; these read PRRL…RLPS and KSPS…SLLR.

This is an uncharacterized protein from Schizosaccharomyces pombe (strain 972 / ATCC 24843) (Fission yeast).